The sequence spans 494 residues: Glycerol kinase (494 aa).

Thr12 is an ADP binding site. ATP contacts are provided by Thr12, Thr13, and Ser14. Residue Thr12 coordinates sn-glycerol 3-phosphate. Arg16 contacts ADP. Sn-glycerol 3-phosphate contacts are provided by Arg82, Glu83, Tyr135, and Asp244. Glycerol contacts are provided by Arg82, Glu83, Tyr135, Asp244, and Gln245. Thr266 and Gly309 together coordinate ADP. Thr266, Gly309, Gln313, and Gly409 together coordinate ATP. ADP contacts are provided by Gly409 and Asn413.

This sequence belongs to the FGGY kinase family.

It catalyses the reaction glycerol + ATP = sn-glycerol 3-phosphate + ADP + H(+). Its pathway is polyol metabolism; glycerol degradation via glycerol kinase pathway; sn-glycerol 3-phosphate from glycerol: step 1/1. Inhibited by fructose 1,6-bisphosphate (FBP). Its function is as follows. Key enzyme in the regulation of glycerol uptake and metabolism. Catalyzes the phosphorylation of glycerol to yield sn-glycerol 3-phosphate. This is Glycerol kinase from Alteromonas mediterranea (strain DSM 17117 / CIP 110805 / LMG 28347 / Deep ecotype).